We begin with the raw amino-acid sequence, 622 residues long: tRNA uridine 5-carboxymethylaminomethyl modification enzyme MnmG (622 aa).

10-15 (GGGHAG) is an FAD binding site. An NAD(+)-binding site is contributed by 269-283 (GPRYCPSVEDKIVKF).

It belongs to the MnmG family. Homodimer. Heterotetramer of two MnmE and two MnmG subunits. Requires FAD as cofactor.

The protein resides in the cytoplasm. Its function is as follows. NAD-binding protein involved in the addition of a carboxymethylaminomethyl (cmnm) group at the wobble position (U34) of certain tRNAs, forming tRNA-cmnm(5)s(2)U34. The chain is tRNA uridine 5-carboxymethylaminomethyl modification enzyme MnmG from Bartonella quintana (strain Toulouse) (Rochalimaea quintana).